The sequence spans 343 residues: Glucan endo-1,3-beta-glucosidase, acidic isoform GI9 (343 aa).

The N-terminal stretch at 1–29 is a signal peptide; that stretch reads MTLCIKNGFLAAALVLVGLLICSIQMIGA. Glutamine 30 is modified (pyrrolidone carboxylic acid). Glutamate 124 serves as the catalytic Proton donor. Glutamate 264 serves as the catalytic Nucleophile.

Belongs to the glycosyl hydrolase 17 family.

It is found in the secreted. The protein resides in the extracellular space. The catalysed reaction is Hydrolysis of (1-&gt;3)-beta-D-glucosidic linkages in (1-&gt;3)-beta-D-glucans.. Its function is as follows. Implicated in the defense of plants against pathogens. The sequence is that of Glucan endo-1,3-beta-glucosidase, acidic isoform GI9 (PR2) from Nicotiana tabacum (Common tobacco).